We begin with the raw amino-acid sequence, 444 residues long: MQLHSLIASTALLITSALAATSSSSSIPSSCTISSHATATAQSDLDKYSRCDTLVGNLTIGGGLKTGALANVKEINGSLTIFNATNLTSFAADSLESITDSLNLQSLTILTSASFGSLQSVDSIKLITLPAISSFTSNIKSANNIYISDTSLQSVDGFSALKKVNVFNVNNNKKLTSIKSPVETVSDSLQFSFNGNQTKITFDDLVWANNISLTDVHSVSFANLQKINSSLGFINNSISSLNFTKLNTIGQTFSIVSNDYLKNLSFSNLSTIGGALVVANNTGLQKIGGLDNLTTIGGTLEVVGNFTSLNLDSLKSVKGGADVESKSSNFSCNALKALQKKGGIKGESFVCKNGASSTSVKLSSTSKSQSSQTTAKVSKSSSKAEEKKFTSGDIKAAASASSVSSSGASSSSSKSSKGNAAIMAPIGQTTPLVGLLTAIIMSIM.

The signal sequence occupies residues 1–19 (MQLHSLIASTALLITSALA). N-linked (GlcNAc...) asparagine glycans are attached at residues Asn57, Asn76, Asn83, Asn86, Asn196, Asn210, Asn228, Asn235, Asn242, Asn263, Asn268, Asn280, Asn292, Asn305, and Asn329. Composition is skewed to low complexity over residues 359–381 (SVKL…SKSS) and 395–418 (KAAA…SSKG). The segment at 359-418 (SVKLSSTSKSQSSQTTAKVSKSSSKAEEKKFTSGDIKAAASASSVSSSGASSSSSKSSKG) is disordered. The GPI-anchor amidated asparagine moiety is linked to residue Asn419. A propeptide spans 420–444 (AAIMAPIGQTTPLVGLLTAIIMSIM) (removed in mature form).

Belongs to the SPS2 family. In terms of processing, extensively N- and O-mannosylated.

The protein localises to the cell membrane. The protein resides in the secreted. It is found in the cell wall. In terms of biological role, has a partially redundant function to ECM33 in cell wall integrity. May be involved in a repair mechanism activated in response to cell wall damage. The protein is Cell wall mannoprotein PST1 (PST1) of Saccharomyces cerevisiae (strain ATCC 204508 / S288c) (Baker's yeast).